The chain runs to 167 residues: Small ribosomal subunit protein uS3m (167 aa).

The transit peptide at 1-35 (MVALYCGGGLRPLMLSWSRDLPCIWRALHTSAVCF) directs the protein to the mitochondrion.

It belongs to the universal ribosomal protein uS3 family. As to quaternary structure, component of the mitochondrial ribosome small subunit (28S) which comprises a 12S rRNA and about 30 distinct proteins.

The protein localises to the mitochondrion. The chain is Small ribosomal subunit protein uS3m (MRPS24) from Bos taurus (Bovine).